Consider the following 152-residue polypeptide: Ribosome maturation factor RimP (152 aa).

This sequence belongs to the RimP family.

It localises to the cytoplasm. Its function is as follows. Required for maturation of 30S ribosomal subunits. This chain is Ribosome maturation factor RimP, found in Elusimicrobium minutum (strain Pei191).